The following is a 463-amino-acid chain: Aurantioclavine synthase cnsA (463 aa).

The 184-residue stretch at 16–199 (ERFNQRGNVF…TQATVRVFPD (184 aa)) folds into the FAD-binding PCMH-type domain.

Belongs to the oxygen-dependent FAD-linked oxidoreductase family. It depends on FAD as a cofactor.

It participates in alkaloid biosynthesis. Its function is as follows. FAD-linked oxidoreductase; part of the gene cluster that mediates the biosynthesis of communesins, a prominent class of indole alkaloids with great potential as pharmaceuticals. Communesins are biosynthesized by the coupling of tryptamine and aurantioclavine, two building blocks derived from L-tryptophan. The L-tryptophan decarboxylase cnsB converts L-tryptophan to tryptamine, whereas the tryptophan dimethylallyltransferase cnsF converts L-tryptophan to 4-dimethylallyl tryptophan which is further transformed to aurantioclavine by the aurantioclavine synthase cnsA, probably aided by the catalase cnsD. The cytochrome P450 monooxygenase cnsC catalyzes the heterodimeric coupling between the two different indole moieties, tryptamine and aurantioclavine, to construct vicinal quaternary stereocenters and yield the heptacyclic communesin scaffold. The O-methyltransferase cnsE then methylates the communesin scaffold to produce communesin K, the simplest characterized communesin that contains the heptacyclic core. The dioxygenase cnsJ converts communesin K into communesin I. Acylation to introduce the hexadienyl group at position N16 of communesin I by the acyltransferase cnsK leads to the production of communesin B. The hexadienyl group is produced by the highly reducing polyketide synthase cnsI, before being hydrolytically removed from cnsI by the serine hydrolase cnsH, converted into hexadienyl-CoA by the CoA ligase cnsG, and then transferred to communesin I by cnsK. Surprisingly, cnsK may also be a promiscuous acyltransferase that can tolerate a range of acyl groups, including acetyl-, propionyl-, and butyryl-CoA, which lead to communesins A, G and H respectively. The roles of the alpha-ketoglutarate-dependent dioxygenases cnsM and cnsP have still to be determined. This is Aurantioclavine synthase cnsA from Penicillium expansum (Blue mold rot fungus).